The sequence spans 117 residues: Immunoglobulin kappa variable 1D-17 (117 aa).

The first 22 residues, 1-22 (MDMRVPAQLLGLLLLWFPGARC), serve as a signal peptide directing secretion. Residues 23 to 45 (NIQMTQSPSAMSASVGDRVTITC) form a framework-1 region. In terms of domain architecture, Ig-like spans 23–117 (NIQMTQSPSA…YYCLQHNSYP (95 aa)). An intrachain disulfide couples Cys-45 to Cys-110. The complementarity-determining-1 stretch occupies residues 46-56 (RARQGISNYLA). A framework-2 region spans residues 57-71 (WFQQKPGKVPKHLIY). Residues 72 to 78 (AASSLQS) form a complementarity-determining-2 region. The tract at residues 79 to 110 (GVPSRFSGSGSGTEFTLTISSLQPEDFATYYC) is framework-3. The interval 111–117 (LQHNSYP) is complementarity-determining-3.

Immunoglobulins are composed of two identical heavy chains and two identical light chains; disulfide-linked.

Its subcellular location is the secreted. It is found in the cell membrane. In terms of biological role, v region of the variable domain of immunoglobulin light chains that participates in the antigen recognition. Immunoglobulins, also known as antibodies, are membrane-bound or secreted glycoproteins produced by B lymphocytes. In the recognition phase of humoral immunity, the membrane-bound immunoglobulins serve as receptors which, upon binding of a specific antigen, trigger the clonal expansion and differentiation of B lymphocytes into immunoglobulins-secreting plasma cells. Secreted immunoglobulins mediate the effector phase of humoral immunity, which results in the elimination of bound antigens. The antigen binding site is formed by the variable domain of one heavy chain, together with that of its associated light chain. Thus, each immunoglobulin has two antigen binding sites with remarkable affinity for a particular antigen. The variable domains are assembled by a process called V-(D)-J rearrangement and can then be subjected to somatic hypermutations which, after exposure to antigen and selection, allow affinity maturation for a particular antigen. The protein is Immunoglobulin kappa variable 1D-17 of Homo sapiens (Human).